We begin with the raw amino-acid sequence, 557 residues long: Potassium-transporting ATPase potassium-binding subunit (557 aa).

12 helical membrane-spanning segments follow: residues 5–25, 63–83, 132–152, 170–190, 253–273, 283–303, 329–349, 356–376, 379–399, 416–436, 484–504, and 526–546; these read GFLLIATFLLVLMVLARPLGS, LSAILGLNILGLAVLFFMLLG, GLTVQNFLSAASGIAVIFALI, LLRITLWVLTPVALLIALFFI, FVQMLAIFLIPTALCFAFGEV, LLWAMSVIFVICVGVVMWAEV, VLVSSLFAVVTTAASCGAVIA, ALGGMVPMWLMQIGEVVFGGV, GLYGMMLFVLLAVFIAGLMIG, LTALAILVTPTLVLMGAALAM, LLALCMFVGRFGVIIPVMAIA, and LFVGLLIGTVLLVGALTFIPA.

The protein belongs to the KdpA family. The system is composed of three essential subunits: KdpA, KdpB and KdpC.

The protein resides in the cell inner membrane. Its function is as follows. Part of the high-affinity ATP-driven potassium transport (or Kdp) system, which catalyzes the hydrolysis of ATP coupled with the electrogenic transport of potassium into the cytoplasm. This subunit binds the periplasmic potassium ions and delivers the ions to the membrane domain of KdpB through an intramembrane tunnel. The sequence is that of Potassium-transporting ATPase potassium-binding subunit from Escherichia coli O127:H6 (strain E2348/69 / EPEC).